Consider the following 801-residue polypeptide: Probable methionine--tRNA ligase (801 aa).

The short motif at 25 to 35 (PYVNNVPHLGN) is the 'HIGH' region element. The 'KMSKS' region motif lies at 347–351 (KFSKS). An ATP-binding site is contributed by Lys-350. The segment at 606 to 633 (DKLKGTKLSDGGQKKEQKKQSGGSKSKN) is disordered. The tRNA-binding domain occupies 639–742 (TVAKLDIRVG…ESAAVGERVT (104 aa)).

This sequence belongs to the class-I aminoacyl-tRNA synthetase family.

The protein localises to the cytoplasm. The catalysed reaction is tRNA(Met) + L-methionine + ATP = L-methionyl-tRNA(Met) + AMP + diphosphate. In Oryza sativa subsp. japonica (Rice), this protein is Probable methionine--tRNA ligase.